The sequence spans 123 residues: Large ribosomal subunit protein bL20 (123 aa).

Belongs to the bacterial ribosomal protein bL20 family.

In terms of biological role, binds directly to 23S ribosomal RNA and is necessary for the in vitro assembly process of the 50S ribosomal subunit. It is not involved in the protein synthesizing functions of that subunit. This Chlamydia muridarum (strain MoPn / Nigg) protein is Large ribosomal subunit protein bL20 (rplT).